Reading from the N-terminus, the 810-residue chain is Oligoxyloglucan-reducing end-specific xyloglucanase (810 aa).

Residues 1–28 (MRAKNGPGSWLALTAIATSLNTLALAAA) form the signal peptide. N-linked (GlcNAc...) asparagine glycosylation is present at Asn-32. Asp-66 functions as the Nucleophile in the catalytic mechanism. The stretch at 126-135 (FVSQDRGATF) is one BNR 1 repeat. Asn-188 carries an N-linked (GlcNAc...) asparagine glycan. Residues 226–236 (YVTRDSGESWE) form a BNR 2 repeat. Residues Asn-298, Asn-312, and Asn-321 are each glycosylated (N-linked (GlcNAc...) asparagine). The BNR 3 repeat unit spans residues 359-369 (YLSHDGGKSWK). N-linked (GlcNAc...) asparagine glycosylation occurs at Asn-455. The active-site Proton donor is the Asp-498. The N-linked (GlcNAc...) asparagine glycan is linked to Asn-544. The stretch at 554 to 564 (YSADGGSSWTK) is one BNR 4 repeat. 2 N-linked (GlcNAc...) asparagine glycosylation sites follow: Asn-573 and Asn-612. Residues 617-626 (YVTTDLGQTW) form a BNR 5 repeat. N-linked (GlcNAc...) asparagine glycosylation is present at Asn-638. BNR repeat units follow at residues 658 to 667 (YLSRDGGLSY), 705 to 716 (YHTRNFGKKWTK), and 759 to 769 (YRSDDNGKTWV).

This sequence belongs to the glycosyl hydrolase 74 family.

It localises to the secreted. It catalyses the reaction Hydrolysis of cellobiose from the reducing end of xyloglucans consisting of a beta-(1-&gt;4)-linked glucan carrying alpha-D-xylosyl groups on O-6 of the glucose residues. To be a substrate, the first residue must be unsubstituted, the second residue may bear a xylosyl group, whether further glycosylated or not, and the third residue, which becomes the new terminus by the action of the enzyme, is preferably xylosylated, but this xylose residue must not be further substituted.. Functionally, oligoxyloglucan-reducing end-specific xyloglucanase involved in degradation of xyloglucans. Releases the first two glycosyl segments from oligoxyloglucans. Active against cotton xyloglucan, tamarind xyloglucan and tamarind xyloglucan oligomers. In Emericella nidulans (strain FGSC A4 / ATCC 38163 / CBS 112.46 / NRRL 194 / M139) (Aspergillus nidulans), this protein is Oligoxyloglucan-reducing end-specific xyloglucanase (xgcA).